Consider the following 339-residue polypeptide: Ketol-acid reductoisomerase (NADP(+)) (339 aa).

The region spanning 1-182 (MRVYYDRDAD…GGGRSGVIET (182 aa)) is the KARI N-terminal Rossmann domain. Residues 24–27 (YGSQ), arginine 48, serine 51, threonine 53, and 83–86 (DELQ) contribute to the NADP(+) site. Residue histidine 108 is part of the active site. Glycine 134 contributes to the NADP(+) binding site. The 146-residue stretch at 183-328 (NFREECETDL…GRLRAMMPWI (146 aa)) folds into the KARI C-terminal knotted domain. Mg(2+)-binding residues include aspartate 191, glutamate 195, glutamate 227, and glutamate 231. Residue serine 252 coordinates substrate.

It belongs to the ketol-acid reductoisomerase family. Mg(2+) is required as a cofactor.

The catalysed reaction is (2R)-2,3-dihydroxy-3-methylbutanoate + NADP(+) = (2S)-2-acetolactate + NADPH + H(+). The enzyme catalyses (2R,3R)-2,3-dihydroxy-3-methylpentanoate + NADP(+) = (S)-2-ethyl-2-hydroxy-3-oxobutanoate + NADPH + H(+). Its pathway is amino-acid biosynthesis; L-isoleucine biosynthesis; L-isoleucine from 2-oxobutanoate: step 2/4. It functions in the pathway amino-acid biosynthesis; L-valine biosynthesis; L-valine from pyruvate: step 2/4. In terms of biological role, involved in the biosynthesis of branched-chain amino acids (BCAA). Catalyzes an alkyl-migration followed by a ketol-acid reduction of (S)-2-acetolactate (S2AL) to yield (R)-2,3-dihydroxy-isovalerate. In the isomerase reaction, S2AL is rearranged via a Mg-dependent methyl migration to produce 3-hydroxy-3-methyl-2-ketobutyrate (HMKB). In the reductase reaction, this 2-ketoacid undergoes a metal-dependent reduction by NADPH to yield (R)-2,3-dihydroxy-isovalerate. In Phenylobacterium zucineum (strain HLK1), this protein is Ketol-acid reductoisomerase (NADP(+)).